The sequence spans 419 residues: DNA ligase (419 aa).

The segment at 1–120 is NTD; sequence MLNHFPGHCS…ARQKRGAHTN (120 aa). The interval 121-317 is AD domain; sequence RGMIPPMLVK…NYHSAHLAKL (197 aa). The N6-AMP-lysine intermediate role is filled by Lys-151. Lys-151, Glu-203, and Phe-232 together coordinate ATP. Glu-203 serves as a coordination point for a divalent metal cation. Glu-291 is a binding site for a divalent metal cation. 2 residues coordinate ATP: Ile-294 and Lys-316. The OB domain stretch occupies residues 318–419; sequence KPLLDAEFIL…REPINVLEII (102 aa).

This sequence belongs to the ATP-dependent DNA ligase family.

Its subcellular location is the virion. The catalysed reaction is ATP + (deoxyribonucleotide)n-3'-hydroxyl + 5'-phospho-(deoxyribonucleotide)m = (deoxyribonucleotide)n+m + AMP + diphosphate.. Functionally, very low-fidelity DNA ligase that seals nicks in double-stranded DNA during DNA repair. Together with the viral repair DNA polymerase X, fills the single nucleotide gaps generated by the AP endonuclease. It is not essential for viral replication and recombination. Displays a very low adenylation activity towards DNA with 3'-dideoxy- or 3'-amino-terminated nicks compared to regular nick DNA. This chain is DNA ligase, found in African swine fever virus (isolate Tick/South Africa/Pretoriuskop Pr4/1996) (ASFV).